The chain runs to 299 residues: Regucalcin (299 aa).

E18 is a binding site for a divalent metal cation. R101, N103, and E121 together coordinate substrate. Residue K144 is modified to N6-succinyllysine. A divalent metal cation-binding residues include N154 and D204. Catalysis depends on D204, which acts as the Proton donor/acceptor. N6-succinyllysine is present on residues K244 and K253.

This sequence belongs to the SMP-30/CGR1 family. In terms of assembly, monomer. The cofactor is Zn(2+). Mn(2+) serves as cofactor. Ca(2+) is required as a cofactor. Requires Mg(2+) as cofactor.

The protein resides in the cytoplasm. It catalyses the reaction D-glucono-1,5-lactone + H2O = D-gluconate + H(+). Functionally, gluconolactonase with low activity towards other sugar lactones, including gulonolactone and galactonolactone. Can also hydrolyze diisopropyl phosphorofluoridate and phenylacetate (in vitro). Calcium-binding protein. Modulates Ca(2+) signaling, and Ca(2+)-dependent cellular processes and enzyme activities. The chain is Regucalcin (RGN) from Macaca fascicularis (Crab-eating macaque).